We begin with the raw amino-acid sequence, 1033 residues long: Kinesin-like protein KIN-4A (1033 aa).

Residues Cys11 to Ile366 enclose the Kinesin motor domain. Gly89–Thr96 contributes to the ATP binding site. Residues Gln443–Arg462 are disordered. Positions Asp453–Arg462 are enriched in basic and acidic residues. Positions Ala525–Gln638 form a coiled coil. The disordered stretch occupies residues Asp763–Leu785. Positions Ile863–Leu895 form a coiled coil.

The protein belongs to the TRAFAC class myosin-kinesin ATPase superfamily. Kinesin family. KIN-4 subfamily. In terms of assembly, homodimer. As to expression, expressed in cotton fibers.

It localises to the cytoplasm. Functionally, kinesin-like motor protein involved in the control of the oriented deposition of cellulose microfibrils. The polypeptide is Kinesin-like protein KIN-4A (Gossypium hirsutum (Upland cotton)).